The chain runs to 359 residues: Glycerol-3-phosphate dehydrogenase [NAD(P)+] (359 aa).

Residues Thr11, Trp12, Arg32, and Lys107 each contribute to the NADPH site. Sn-glycerol 3-phosphate-binding residues include Lys107 and Gly138. Residue Ala142 coordinates NADPH. 5 residues coordinate sn-glycerol 3-phosphate: Lys193, Asp246, Ser256, Arg257, and Asn258. Lys193 serves as the catalytic Proton acceptor. Arg257 contributes to the NADPH binding site. The NADPH site is built by Val281 and Glu283.

The protein belongs to the NAD-dependent glycerol-3-phosphate dehydrogenase family.

The protein resides in the cytoplasm. The enzyme catalyses sn-glycerol 3-phosphate + NAD(+) = dihydroxyacetone phosphate + NADH + H(+). The catalysed reaction is sn-glycerol 3-phosphate + NADP(+) = dihydroxyacetone phosphate + NADPH + H(+). Its pathway is membrane lipid metabolism; glycerophospholipid metabolism. Its function is as follows. Catalyzes the reduction of the glycolytic intermediate dihydroxyacetone phosphate (DHAP) to sn-glycerol 3-phosphate (G3P), the key precursor for phospholipid synthesis. This chain is Glycerol-3-phosphate dehydrogenase [NAD(P)+], found in Dehalococcoides mccartyi (strain CBDB1).